The primary structure comprises 392 residues: Heat-inducible transcription repressor HrcA (392 aa).

The protein belongs to the HrcA family.

Its function is as follows. Negative regulator of class I heat shock genes (grpE-dnaK-dnaJ and groELS operons). Prevents heat-shock induction of these operons. In Synechococcus sp. (strain JA-3-3Ab) (Cyanobacteria bacterium Yellowstone A-Prime), this protein is Heat-inducible transcription repressor HrcA.